Reading from the N-terminus, the 510-residue chain is Pheromone-processing carboxypeptidase kex1 (510 aa).

The N-terminal stretch at 1 to 21 (MISKLLKIVLLTAGVIGNTLA) is a signal peptide. At 22–468 (DSRIHEQYLV…SPDLGNGNYK (447 aa)) the chain is on the lumenal side. Asn51 and Asn104 each carry an N-linked (GlcNAc...) asparagine glycan. Residues Ser175 and Asp367 contribute to the active site. Asn392 and Asn416 each carry an N-linked (GlcNAc...) asparagine glycan. His427 is a catalytic residue. Residues 469–489 (WLYLGLIPVALTIIILFSIYL) traverse the membrane as a helical segment. The Cytoplasmic portion of the chain corresponds to 490-510 (CRRFGLFGLSKQRYQPISPTP).

This sequence belongs to the peptidase S10 family.

It localises to the golgi apparatus. It is found in the trans-Golgi network membrane. The protein resides in the vacuole membrane. The catalysed reaction is Preferential release of a C-terminal arginine or lysine residue.. In terms of biological role, protease with a carboxypeptidase B-like function involved in the C-terminal processing of the lysine and arginine residues from protein precursors. Promotes cell fusion and is involved in the programmed cell death. This chain is Pheromone-processing carboxypeptidase kex1 (kex1), found in Schizosaccharomyces pombe (strain 972 / ATCC 24843) (Fission yeast).